Reading from the N-terminus, the 224-residue chain is C-&gt;U-editing enzyme APOBEC-2 (224 aa).

Positions 1-24 are disordered; sequence MAQKEEAAVATEAASQNGEDLENL. Zn(2+) is bound by residues E60 and H98. A CMP/dCMP-type deaminase domain is found at 64–169; the sequence is GRNKTFLCYV…PEIQAALKKL (106 aa). The Proton donor role is filled by E100. Positions 128 and 131 each coordinate Zn(2+).

The protein belongs to the cytidine and deoxycytidylate deaminase family. As to quaternary structure, homotetramer. It depends on Zn(2+) as a cofactor. Expressed exclusively in heart and skeletal muscle.

The catalysed reaction is cytidine(6666) in apoB mRNA + H2O + H(+) = uridine(6666) in apoB mRNA + NH4(+). In terms of biological role, probable C to U editing enzyme whose physiological substrate is not yet known. Does not display detectable apoB mRNA editing. Has a low intrinsic cytidine deaminase activity. May play a role in the epigenetic regulation of gene expression through the process of active DNA demethylation. The sequence is that of C-&gt;U-editing enzyme APOBEC-2 (APOBEC2) from Homo sapiens (Human).